Reading from the N-terminus, the 397-residue chain is Mediator of RNA polymerase II transcription subunit 3 (397 aa).

The residue at position 1 (M1) is an N-acetylmethionine. A compositionally biased stretch (low complexity) spans 147-165 (ASTPTTTATPHANPITHAH). 3 disordered regions span residues 147-227 (ASTP…AQAQ), 288-327 (SMGAQNQGGQVSMSQFNGSGNGSNPNTNTNSNNTPLQSQL), and 346-370 (FQQQQQQQQQQQQPQPQYNMNMGMN). 2 stretches are compositionally biased toward polar residues: residues 166 to 178 (SLSNPNSTATMQH) and 189 to 202 (SGSTMGTPTVHNST). A compositionally biased stretch (basic residues) spans 211 to 223 (KKPRKPRQTKKAK). The segment covering 290-303 (GAQNQGGQVSMSQF) has biased composition (polar residues). A compositionally biased stretch (low complexity) spans 309-322 (GSNPNTNTNSNNTP).

Belongs to the mediator complex subunit 3 family. As to quaternary structure, component of the Mediator complex, which is composed of at least 21 subunits that form three structurally distinct submodules. The Mediator head module contains MED6, MED8, MED11, SRB4/MED17, SRB5/MED18, ROX3/MED19, SRB2/MED20 and SRB6/MED22, the middle module contains MED1, MED4, NUT1/MED5, MED7, CSE2/MED9, NUT2/MED10, SRB7/MED21 and SOH1/MED31, and the tail module contains MED2, PGD1/MED3, RGR1/MED14, GAL11/MED15 and SIN4/MED16. The head and the middle modules interact directly with RNA polymerase II, whereas the elongated tail module interacts with gene-specific regulatory proteins. PGD1/MED3 interacts directly with the CYC8-TUP1 corepressor proteins.

The protein localises to the nucleus. Component of the Mediator complex, a coactivator involved in the regulated transcription of nearly all RNA polymerase II-dependent genes. Mediator functions as a bridge to convey information from gene-specific regulatory proteins to the basal RNA polymerase II transcription machinery. The Mediator complex, having a compact conformation in its free form, is recruited to promoters by direct interactions with regulatory proteins and serves for the assembly of a functional preinitiation complex with RNA polymerase II and the general transcription factors. The Mediator complex unfolds to an extended conformation and partially surrounds RNA polymerase II, specifically interacting with the unphosphorylated form of the C-terminal domain (CTD) of RNA polymerase II. The Mediator complex dissociates from the RNA polymerase II holoenzyme and stays at the promoter when transcriptional elongation begins. PGD1/MED3 is also involved in direct repeat recombination. This Saccharomyces cerevisiae (strain ATCC 204508 / S288c) (Baker's yeast) protein is Mediator of RNA polymerase II transcription subunit 3 (PGD1).